The primary structure comprises 524 residues: Cytokinin dehydrogenase 7 (524 aa).

Residues 58–238 (NCVKPLAVVR…TRARVLLQPA (181 aa)) enclose the FAD-binding PCMH-type domain. Residues A91, G93, N94, and G95 each contribute to the FAD site. H96 is subject to Pros-8alpha-FAD histidine. FAD contacts are provided by S97, Q101, D162, T167, S173, V177, I228, Y479, S514, and Q517.

This sequence belongs to the oxygen-dependent FAD-linked oxidoreductase family. The cofactor is FAD. In terms of tissue distribution, expressed in the vasculature of roots, hypocotyls, cotyledons and leaves of young seedlings. In flowers, expressed in the transmitting tissue of the gynoecium prior to pollination. Expressed in the mature embryo sac with maximum activity in the egg cell and the synergids.

It localises to the cytoplasm. The protein localises to the cytosol. The enzyme catalyses N(6)-dimethylallyladenine + A + H2O = 3-methyl-2-butenal + adenine + AH2. Its function is as follows. Catalyzes the oxidation of cytokinins, a family of N(6)-substituted adenine derivatives that are plant hormones, where the substituent is an isopentenyl group. Catalyzes in vitro the oxidation of various types of cytokinin nucleotides that are known as direct products of cytokinin biosynthesis. The polypeptide is Cytokinin dehydrogenase 7 (CKX7) (Arabidopsis thaliana (Mouse-ear cress)).